A 405-amino-acid chain; its full sequence is Proline-rich P65 protein (405 aa).

Residues 1–58 (MDINKPGWNQSDQQATAYDPNQQQYYGDGSTYYDPDQAVDPNQAYYPDPNTYPDAAAY) form a disordered region. Polar residues predominate over residues 7 to 25 (GWNQSDQQATAYDPNQQQY). 12 tandem repeats follow at residues 40–45 (DPNQAY), 75–80 (DPNQAY), 83–87 (DPNAY), 89–93 (DPNAY), 95–99 (DPNAY), 101–105 (DPNAY), 107–111 (DPNAY), 119–123 (DPNAY), 140–145 (DPNQAY), 148–152 (DPNAY), 154–158 (DPNAY), and 168–172 (DPNAY). The segment at 40–172 (DPNQAYYPDP…YVTSTDPNAY (133 aa)) is 12 X 5 AA repeats of D-P-N-Q-A-Y.

In terms of processing, the N-terminus is blocked.

It is found in the cell membrane. The chain is Proline-rich P65 protein (p65) from Mycoplasma pneumoniae (strain ATCC 29342 / M129 / Subtype 1) (Mycoplasmoides pneumoniae).